Reading from the N-terminus, the 508-residue chain is Steroid 17-alpha-hydroxylase/17,20 lyase (508 aa).

A heme-binding site is contributed by Cys445.

This sequence belongs to the cytochrome P450 family. Requires heme as cofactor.

It is found in the membrane. It catalyses the reaction a C21-steroid + reduced [NADPH--hemoprotein reductase] + O2 = a 17alpha-hydroxy-C21-steroid + oxidized [NADPH--hemoprotein reductase] + H2O + H(+). The enzyme catalyses 17alpha-hydroxyprogesterone + reduced [NADPH--hemoprotein reductase] + O2 = androst-4-ene-3,17-dione + acetate + oxidized [NADPH--hemoprotein reductase] + H2O + 2 H(+). The catalysed reaction is 17alpha-hydroxypregnenolone + reduced [NADPH--hemoprotein reductase] + O2 = 3beta-hydroxyandrost-5-en-17-one + acetate + oxidized [NADPH--hemoprotein reductase] + H2O + 2 H(+). It participates in lipid metabolism; steroid biosynthesis. Its function is as follows. Conversion of pregnenolone and progesterone to their 17-alpha-hydroxylated products and subsequently to dehydroepiandrosterone (DHEA) and androstenedione. Catalyzes both the 17-alpha-hydroxylation and the 17,20-lyase reaction. The chain is Steroid 17-alpha-hydroxylase/17,20 lyase (CYP17A1) from Gallus gallus (Chicken).